The chain runs to 62 residues: Small ribosomal subunit protein bS21 (62 aa).

Residues Lys40 to Ala52 are compositionally biased toward basic and acidic residues. The disordered stretch occupies residues Lys40–Tyr62. Over residues Arg53–Tyr62 the composition is skewed to basic residues.

The protein belongs to the bacterial ribosomal protein bS21 family.

The sequence is that of Small ribosomal subunit protein bS21 from Limosilactobacillus fermentum (strain NBRC 3956 / LMG 18251) (Lactobacillus fermentum).